Here is a 378-residue protein sequence, read N- to C-terminus: Probable E3 ubiquitin-protein ligase LUL3 (378 aa).

A compositionally biased stretch (basic residues) spans 1 to 21 (MGISLSKRRRDNNNNHHHPHH). Positions 1-79 (MGISLSKRRR…PPSQISYRPY (79 aa)) are disordered. A lipid anchor (N-myristoyl glycine) is attached at Gly-2. Pro residues-rich tracts occupy residues 29 to 38 (DPPPQQPPPQ) and 55 to 72 (SLPPPPAQPPSSSQPPPS). Residues 164–283 (FVFDALFDGS…GSFKVKVMKQ (120 aa)) are DAR2 domain. The RING-type; atypical zinc-finger motif lies at 321 to 360 (CVICLTEPKDTAVMPCRHLCLCSDCAEELRFQTNKCPICR).

It belongs to the RING-type zinc finger family. LOG2 subfamily. In terms of processing, myristoylated (in vitro).

It catalyses the reaction S-ubiquitinyl-[E2 ubiquitin-conjugating enzyme]-L-cysteine + [acceptor protein]-L-lysine = [E2 ubiquitin-conjugating enzyme]-L-cysteine + N(6)-ubiquitinyl-[acceptor protein]-L-lysine.. It functions in the pathway protein modification; protein ubiquitination. In terms of biological role, acts as an E3 ubiquitin-protein ligase, or as part of E3 complex, which accepts ubiquitin from specific E2 ubiquitin-conjugating enzymes and then transfers it to substrates (in vitro). The chain is Probable E3 ubiquitin-protein ligase LUL3 (LUL3) from Arabidopsis thaliana (Mouse-ear cress).